Reading from the N-terminus, the 598-residue chain is Elongation factor 4 2 (598 aa).

A tr-type G domain is found at 2–184 (KHIRNFCIIA…GIVKNLPAPK (183 aa)). GTP is bound by residues 14 to 19 (DHGKST) and 131 to 134 (NKID).

The protein belongs to the TRAFAC class translation factor GTPase superfamily. Classic translation factor GTPase family. LepA subfamily.

It is found in the cell inner membrane. It catalyses the reaction GTP + H2O = GDP + phosphate + H(+). In terms of biological role, required for accurate and efficient protein synthesis under certain stress conditions. May act as a fidelity factor of the translation reaction, by catalyzing a one-codon backward translocation of tRNAs on improperly translocated ribosomes. Back-translocation proceeds from a post-translocation (POST) complex to a pre-translocation (PRE) complex, thus giving elongation factor G a second chance to translocate the tRNAs correctly. Binds to ribosomes in a GTP-dependent manner. The protein is Elongation factor 4 2 of Rhodopirellula baltica (strain DSM 10527 / NCIMB 13988 / SH1).